Reading from the N-terminus, the 88-residue chain is uncharacterized protein (88 aa).

This is an uncharacterized protein from Escherichia coli O157:H7.